The chain runs to 213 residues: Ergothioneine transport ATP-binding protein EgtV (213 aa).

The ABC transporter domain maps to 5 to 212; the sequence is VTIENVSFNY…ATKTLEIKAL (208 aa). 37 to 44 serves as a coordination point for ATP; that stretch reads GESGSGKS.

It belongs to the ABC transporter superfamily. As to quaternary structure, the complex is composed of two ATP-binding proteins (EgtV) and two transmembrane proteins (EgtU).

It localises to the cell inner membrane. The enzyme catalyses ergothioneine(out) + ATP + H2O = ergothioneine(in) + ADP + phosphate + H(+). In terms of biological role, part of the ABC transporter complex EgtUV involved in the uptake of ergothioneine (EGT), a natural low-molecular weight (LMW) thiol antioxidant which protects H.pylori against bleach stress. Responsible for energy coupling to the transport system. This Helicobacter pylori (strain G27) protein is Ergothioneine transport ATP-binding protein EgtV.